The following is a 379-amino-acid chain: Mating-type protein MAT-1 (379 aa).

A DNA-binding region (alpha box) is located at residues 60-117; that stretch reads RARKALNAFVRFRCYYVAIPMFKQWPMKKLSNLIGLLWEADPNKSLWSLMTKAWSTIR.

The protein belongs to the MATALPHA1 family.

Its subcellular location is the nucleus. Mating type proteins are sequence specific DNA-binding proteins that act as master switches in fungal differentiation by controlling gene expression in a cell type-specific fashion. Transcriptional activator that induces the transcription of alpha-specific genes. The protein is Mating-type protein MAT-1 (MAT1) of Curvularia kusanoi (Cochliobolus kusanoi).